Reading from the N-terminus, the 215-residue chain is NAD(P)H-hydrate epimerase (215 aa).

One can recognise a YjeF N-terminal domain in the interval 8 to 212; the sequence is MYNIENKGHD…KIGIPPEAEE (205 aa). 57 to 61 provides a ligand contact to (6S)-NADPHX; the sequence is NNGGD. K(+) contacts are provided by Asn-58 and Asp-124. Residues 128 to 134, Tyr-139, and Asp-157 contribute to the (6S)-NADPHX site; that span reads GTGISGE. Ser-160 is a binding site for K(+).

The protein belongs to the NnrE/AIBP family. K(+) is required as a cofactor.

It catalyses the reaction (6R)-NADHX = (6S)-NADHX. The enzyme catalyses (6R)-NADPHX = (6S)-NADPHX. Functionally, catalyzes the epimerization of the S- and R-forms of NAD(P)HX, a damaged form of NAD(P)H that is a result of enzymatic or heat-dependent hydration. This is a prerequisite for the S-specific NAD(P)H-hydrate dehydratase to allow the repair of both epimers of NAD(P)HX. The sequence is that of NAD(P)H-hydrate epimerase from Nitrosopumilus maritimus (strain SCM1).